Consider the following 491-residue polypeptide: MKIAIAGGGIGGLISALMLRKKGYEVSLFEKRDRLGGRLAFTEEQGYRIDEGPTIVLLPEMLTSILNEAGISRDQYELININPLYKLHFKDGSSYTKYNSIERQIQEIKENFPGNEEGFVQFMKDMEIRFNLGKDQFLEKSFHDKRTFWTRNNLKTLVHLKAYKSVNNSLKAYFQDERIRQAYSLQTLYIGGNPLDSPALYSLISFSEHKHGIYYLKGGYASLVTVLENALLNSGVKVMKNATVERVVTEGEQAAALIVNGEEVKADAFVLNGDFPGASKMIPKESMPARNYTASSSCVLLYFGLDKVYRDSPVHQFFMGSNFQQHMKEIFETKEVPSDPSIYAFHPSVIDSSLAPEGHGVLYALVPVPSGSPINWGEQEGFVEKVIDQLEERGFPGLRKSIQWKKVRTPDDKEMEGLFQGGSFGIAPTLFQSGVFRPQVKPSKLTNVYAAGASIHPGGGIPIVMQGAKLMVSAILSDHQNKEREGVSLSG.

The active site involves Glu208.

It belongs to the carotenoid/retinoid oxidoreductase family. CrtN subfamily.

It carries out the reaction all-trans-4,4'-diapolycopen-4-al + A + H2O = all-trans-4,4'-diapolycopen-4-oate + AH2 + H(+). It functions in the pathway carotenoid biosynthesis. In terms of biological role, involved in the biosynthesis of the major C30 carotenoid methyl 4'-[6-O-(acylglycosyl)oxy]-4,4'-diapolycopen-4-oic acid via 4,4'-diapolycopen-4-oic acid intermediate. Catalyzes the oxidation of 4,4'-diapolycopen-4-al to yield 4,4'-diapolycopen-4-oic acid. The sequence is that of 4,4'-diapolycopen-4-al dehydrogenase from Metabacillus indicus (Bacillus indicus).